We begin with the raw amino-acid sequence, 346 residues long: Protease inhibitor Egf1.5b (346 aa).

The signal sequence occupies residues 1–28 (MYIDTGIMSNNIFLFAFFALVGLTRIEA). Residues 52–104 (CRENEHYNSTRIECEDECNDRNNKLCYRFQQFCWCNEGYIRNSSHICVKLEDC) form the TIL domain.

It belongs to the polydnaviridae EGF-like motif protein family. In terms of assembly, interacts with host PAP1, PAP3 and SPH2.

In terms of biological role, counteracts the host humoral immune response by inhibiting the processing and the amidolytic activity of host PAP1 and PAP3. Thereby, melanization of host hemolymph, normally producing several reactive intermediates toxic for viruses, is deregulated and proper immune response cannot occur. In Microplitis demolitor (Parasitoid wasp), this protein is Protease inhibitor Egf1.5b (O5).